The chain runs to 944 residues: Bifunctional uridylyltransferase/uridylyl-removing enzyme (944 aa).

The interval 1 to 371 (MRDLDFTNIL…RFTHRNRKIA (371 aa)) is uridylyltransferase. The segment at 372-727 (GSVEFVEDRG…VRTDSFHAIT (356 aa)) is uridylyl-removing. Residues 488-604 (VDEHLIRTVD…TDFADRVQSL (117 aa)) form the HD domain. 2 consecutive ACT domains span residues 728–809 (EITV…EVIA) and 839–918 (VIEV…LRER). A disordered region spans residues 911–944 (EEDELRERMPSGIIAPAATARTPPASEKKAGSPI). Positions 925 to 935 (APAATARTPPA) are enriched in low complexity.

It belongs to the GlnD family. Requires Mg(2+) as cofactor.

The catalysed reaction is [protein-PII]-L-tyrosine + UTP = [protein-PII]-uridylyl-L-tyrosine + diphosphate. It carries out the reaction [protein-PII]-uridylyl-L-tyrosine + H2O = [protein-PII]-L-tyrosine + UMP + H(+). With respect to regulation, uridylyltransferase (UTase) activity is inhibited by glutamine, while glutamine likely activates uridylyl-removing (UR) activity. Modifies, by uridylylation and deuridylylation, the PII regulatory proteins GlnB and GlnK, in response to the nitrogen status of the cell that GlnD senses through the glutamine level. Under low glutamine levels, catalyzes the conversion of the PII proteins and UTP to PII-UMP and PPi, while under higher glutamine levels, GlnD likely hydrolyzes PII-UMP to PII and UMP (deuridylylation). Thus, controls uridylylation state and activity of the PII proteins, and plays an important role in the regulation of nitrogen metabolism. The polypeptide is Bifunctional uridylyltransferase/uridylyl-removing enzyme (Rhizobium leguminosarum bv. viciae).